The primary structure comprises 131 residues: Cystatin-like cysteine protease inhibitor EPIC3 (131 aa).

The signal sequence occupies residues 1-22 (MAFTRSIALFAGLALAASSAQG). A glycan (N-linked (GlcNAc...) asparagine) is linked at Asn33. Residues 71–75 (QTVAG) carry the Secondary area of contact motif.

It belongs to the cystatin family.

It is found in the secreted. Its function is as follows. Secreted effector that interacts with and inhibits host apoplastic pathogenesis-related papain-like cysteine proteases. Inhibition of host proteases by a pathogen extracellular protease inhibitor forms a specific type of defense-counterdefense mechanism between plants and microbial pathogens. This chain is Cystatin-like cysteine protease inhibitor EPIC3, found in Phytophthora infestans (strain T30-4) (Potato late blight agent).